The primary structure comprises 72 residues: Small ribosomal subunit protein bS18 (72 aa).

This sequence belongs to the bacterial ribosomal protein bS18 family. In terms of assembly, part of the 30S ribosomal subunit. Forms a tight heterodimer with protein bS6.

Binds as a heterodimer with protein bS6 to the central domain of the 16S rRNA, where it helps stabilize the platform of the 30S subunit. This is Small ribosomal subunit protein bS18 from Fusobacterium nucleatum subsp. nucleatum (strain ATCC 25586 / DSM 15643 / BCRC 10681 / CIP 101130 / JCM 8532 / KCTC 2640 / LMG 13131 / VPI 4355).